A 485-amino-acid chain; its full sequence is Aldehyde dehydrogenase family 3 member A2 (485 aa).

Residues 1 to 463 (MEREVQRVRQ…FLLRRFNKEK (463 aa)) are Cytoplasmic-facing. 185–190 (GNTAVG) contacts NAD(+). Residues E207 and C241 contribute to the active site. Position 293 is a phosphoserine (S293). The helical transmembrane segment at 464–484 (LGLLVLTFLGIVAAVLVNAGY) threads the bilayer. The Prevents secretion from ER signature appears at 481 to 484 (NAGY).

The protein belongs to the aldehyde dehydrogenase family. In terms of assembly, homodimer.

Its subcellular location is the microsome membrane. It is found in the endoplasmic reticulum membrane. The enzyme catalyses an aldehyde + NAD(+) + H2O = a carboxylate + NADH + 2 H(+). It catalyses the reaction a fatty aldehyde + NAD(+) + H2O = a fatty acid + NADH + 2 H(+). The catalysed reaction is (2E)-hexadecenal + NAD(+) + H2O = (E)-hexadec-2-enoate + NADH + 2 H(+). It carries out the reaction hexadecanoate + NADH + 2 H(+) = hexadecanal + NAD(+) + H2O. The enzyme catalyses 22-oxodocosanoate + NAD(+) + H2O = docosanedioate + NADH + 2 H(+). It catalyses the reaction 2,6,10,14-tetramethylpentadecanal + NAD(+) + H2O = 2,6,10,14-tetramethylpentadecanoate + NADH + 2 H(+). The catalysed reaction is octadecanal + NAD(+) + H2O = octadecanoate + NADH + 2 H(+). It carries out the reaction dodecanoate + NADH + 2 H(+) = dodecanal + NAD(+) + H2O. The enzyme catalyses decanal + NAD(+) + H2O = decanoate + NADH + 2 H(+). It catalyses the reaction tetradecanal + NAD(+) + H2O = tetradecanoate + NADH + 2 H(+). The catalysed reaction is octanal + NAD(+) + H2O = octanoate + NADH + 2 H(+). It carries out the reaction heptanal + NAD(+) + H2O = heptanoate + NADH + 2 H(+). The enzyme catalyses (2E,6E)-farnesal + NAD(+) + H2O = (2E,6E)-farnesoate + NADH + 2 H(+). Its function is as follows. Catalyzes the oxidation of medium and long-chain aliphatic aldehydes to fatty acids. Active on a variety of saturated and unsaturated aliphatic aldehydes between 6 and 24 carbons in length. Responsible for conversion of the sphingosine 1-phosphate (S1P) degradation product hexadecenal to hexadecenoic acid. The polypeptide is Aldehyde dehydrogenase family 3 member A2 (ALDH3A2) (Macaca fascicularis (Crab-eating macaque)).